The chain runs to 194 residues: MAEVVQSGPVEAQARHVVYCGVCTLPPEYCEFGGTAKKCEEWLKEKQPELYQRLHSEEAISANLSTLSISAQERAAKDAAKKEAKAALAEARDAERKAASKVQIKRVERNKRKHVTVIAGLEVYGLENKKVAKELGKKFATGSSVTRSAAGNEEITVQGDVSDDVQDWLLEVYGKEIPEANIEIIEDKKKKGSS.

An SUI1 domain is found at Val102–Tyr173.

Belongs to the DENR family. As to quaternary structure, interacts with the 40S ribosomal subunit.

Its subcellular location is the cytoplasm. This chain is Translation machinery-associated protein 22 (tma22), found in Aspergillus oryzae (strain ATCC 42149 / RIB 40) (Yellow koji mold).